The primary structure comprises 484 residues: MNIKDIKKINFFISEKKNKNIHLIGIGGAGMMGIALILLKLGYKVSGSDLLESLMIKKLINLGATIYLQHSEKNIKNVDFIIKSSAISSNNKEILAAKKRNIPILLRAEMIEILMSFKKGIAVSGTHGKTTTTSMIADIFIDSGLDPTVINGGLIKSINSYAKLGSSSYFITEADESDASFLYLNPNIIIVTNIESDHIDHYDNSFKKLKQTFLTFLKKITLYGTAIVCIDNNAICDILTNLKCKIITYGFNKNADVRIFLYKQNNFIGHFYIILKNNKKLNIILNIPGKHNALNAAAAIALAIHEGINNDLMITSLKNFQGTCRRFEFLGFLSIDQGFDKRANCMLIDDYGHHPTELSETIKTIRISWPNKNLIMIFQPHRYTRTYNLYHDFVQTLSQVDVLLILHVYSANEKFIVGADSLSLFNDIKKLGKNYVTLISNHNMILDTLIQTLQGNDIILIQGAGNIDTIAHKILIKKTKKVIK.

Residue 125 to 131 coordinates ATP; the sequence is GTHGKTT.

It belongs to the MurCDEF family.

The protein localises to the cytoplasm. It catalyses the reaction UDP-N-acetyl-alpha-D-muramate + L-alanine + ATP = UDP-N-acetyl-alpha-D-muramoyl-L-alanine + ADP + phosphate + H(+). It participates in cell wall biogenesis; peptidoglycan biosynthesis. In terms of biological role, cell wall formation. In Buchnera aphidicola subsp. Acyrthosiphon pisum (strain Tuc7), this protein is UDP-N-acetylmuramate--L-alanine ligase.